Here is a 333-residue protein sequence, read N- to C-terminus: Gap junction alpha-4 protein (333 aa).

The Cytoplasmic portion of the chain corresponds to 1–20; the sequence is MGDWGFLEKLLDQVQEHSTV. A helical membrane pass occupies residues 21–40; that stretch reads VGKIWLTVLFIFRILILGLA. Topologically, residues 41 to 76 are extracellular; the sequence is GESVWGDEQSDFECNTAQPGCTNVCYDQAFPISHIR. The chain crosses the membrane as a helical span at residues 77-99; sequence YWVLQFLFVSTPTLVYLGHVIYL. Over 100–148 the chain is Cytoplasmic; sequence SRREERLRQKEGELRALPAKDPQVERALAAVERQMAKISVAEDGRLRIR. The chain crosses the membrane as a helical span at residues 149–165; that stretch reads GALMGTYVASVLCKSVL. Residues 166–207 lie on the Extracellular side of the membrane; that stretch reads EAGFLYGQWRLYGWTMEPVFVCQRAPCPYLVDCFVSRPTEKT. A helical membrane pass occupies residues 208 to 230; the sequence is IFIIFMLVVGLISLVLNLLELVH. Over 231–333 the chain is Cytoplasmic; the sequence is LLCRCLSRGM…SSSASKKQYV (103 aa). The segment at 292 to 333 is disordered; the sequence is ANLTTEERLASSRPPLFLDPPPQNGQKPPSRPSSSASKKQYV. Positions 323 to 333 are enriched in low complexity; that stretch reads PSSSASKKQYV.

It belongs to the connexin family. Alpha-type (group II) subfamily. As to quaternary structure, a connexon is composed of a hexamer of connexins. As to expression, expressed in multiple organs and tissues, including heart, uterus, ovary, and blood vessel endothelium.

The protein resides in the cell membrane. Its subcellular location is the cell junction. It is found in the gap junction. Functionally, one gap junction consists of a cluster of closely packed pairs of transmembrane channels, the connexons, through which materials of low MW diffuse from one cell to a neighboring cell. The protein is Gap junction alpha-4 protein (GJA4) of Homo sapiens (Human).